A 1565-amino-acid polypeptide reads, in one-letter code: Structure-specific endonuclease subunit SLX4 (1565 aa).

Positions 1–87 (MVPESAPNGN…ENEYKLDATD (87 aa)) are disordered. A compositionally biased stretch (polar residues) spans 7-24 (PNGNSQPLPSCFTTTGVP). Residues 43 to 58 (KRADPERLRHASEESP) show a composition bias toward basic and acidic residues. S111 is subject to Phosphoserine. K115 is covalently cross-linked (Glycyl lysine isopeptide (Lys-Gly) (interchain with G-Cter in SUMO2)). 2 consecutive UBZ4-type zinc fingers follow at residues 117 to 147 (LFFC…DEAE) and 157 to 185 (IPDC…VRME). 6 residues coordinate Zn(2+): C120, C123, H138, C142, C160, and C163. Residue K171 forms a Glycyl lysine isopeptide (Lys-Gly) (interchain with G-Cter in SUMO2) linkage. Zn(2+)-binding residues include H176 and C180. Disordered regions lie at residues 203–242 (EVDG…PEAP), 279–305 (GAEK…ETTG), and 387–418 (EPQL…SHSP). The span at 220 to 236 (LKRKGVTTKREPRRRKV) shows a compositional bias: basic residues. K283 is covalently cross-linked (Glycyl lysine isopeptide (Lys-Gly) (interchain with G-Cter in SUMO2)). Positions 296–305 (LVTQDSETTG) are enriched in polar residues. Residues 499 to 1565 (MVNNPHLSDV…PSGRKKKDQK (1067 aa)) are interaction with PLK1 and TERF2-TERF2IP. Positions 506-579 (SDVQFQLDSG…LYMADTDMPP (74 aa)) constitute a BTB domain. K649 participates in a covalent cross-link: Glycyl lysine isopeptide (Lys-Gly) (interchain with G-Cter in SUMO2). Disordered regions lie at residues 683 to 769 (RAAD…DPSF), 789 to 848 (GCKQ…SPSQ), 861 to 943 (PSVS…SPRA), 963 to 989 (DEEL…EFSP), 1063 to 1099 (PGVS…PNLE), 1128 to 1212 (GRQA…MGDY), and 1249 to 1337 (SDDC…ITPM). A compositionally biased stretch (basic and acidic residues) spans 715-730 (ENTEHMESSGLEKEEA). Positions 798-808 (PRVSSELSQIT) are enriched in polar residues. The segment covering 809–822 (VDHEEQSDHVRETQ) has biased composition (basic and acidic residues). 2 stretches are compositionally biased toward low complexity: residues 833-848 (SCSL…SPSQ) and 861-875 (PSVS…RVAS). Phosphoserine is present on residues S845 and S875. Residues 877-894 (RSLSPTTPTKQRRGSNIV) show a composition bias toward polar residues. Residues K886, K898, and K925 each participate in a glycyl lysine isopeptide (Lys-Gly) (interchain with G-Cter in SUMO2) cross-link. 2 positions are modified to phosphoserine: S926 and S940. Positions 967–985 (EHTKTESVSKDSPEGRKVP) are enriched in basic and acidic residues. K983 participates in a covalent cross-link: Glycyl lysine isopeptide (Lys-Gly) (interchain with G-Cter in SUMO2). S988 carries the post-translational modification Phosphoserine. The interval 1120-1413 (ITLGAFDSGR…TTETCNPSRL (294 aa)) is interaction with MUS81. The span at 1179-1189 (DVVEVGDSDDE) shows a compositional bias: acidic residues. A phosphoserine mark is found at S1249 and S1254. Acidic residues predominate over residues 1285–1295 (LWDDWNEEEGQ). Residues K1349 and K1350 each participate in a glycyl lysine isopeptide (Lys-Gly) (interchain with G-Cter in SUMO2) cross-link. Disordered stretches follow at residues 1381-1449 (ESDS…SSKS) and 1546-1565 (KEKL…KDQK). S1384 bears the Phosphoserine mark. Positions 1401–1412 (QASTTETCNPSR) are enriched in polar residues. The interaction with SLX1 stretch occupies residues 1406–1565 (ETCNPSRLPT…PSGRKKKDQK (160 aa)). Residues 1437–1449 (SVDGSDNSFSSKS) are compositionally biased toward low complexity. Basic residues predominate over residues 1547-1565 (EKLKHKRRQPSGRKKKDQK).

It belongs to the SLX4 family. Forms a heterodimer with SLX1A/GIYD1. Interacts with ERCC4/XPF; catalytic subunit of the ERCC4-ERCC1 endonuclease. Interacts with MUS81; catalytic subunit of the MUS81-EME1 endonuclease. Interacts with MSH2; component of the MSH2-MSH3 mismatch repair complex. Interacts with TERF2-TERF2IP. Interacts with PLK1 and SLX4IP. As to expression, highly expressed in testis. Expressed in bone marrow, brain, thymus and weakly in heart, kidney and spleen.

The protein resides in the nucleus. Its function is as follows. Regulatory subunit that interacts with and increases the activity of different structure-specific endonucleases. Has several distinct roles in protecting genome stability by resolving diverse forms of deleterious DNA structures originating from replication and recombination intermediates and from DNA damage. Component of the SLX1-SLX4 structure-specific endonuclease that resolves DNA secondary structures generated during DNA repair and recombination. Has endonuclease activity towards branched DNA substrates, introducing single-strand cuts in duplex DNA close to junctions with ss-DNA. Has a preference for 5'-flap structures, and promotes symmetrical cleavage of static and migrating Holliday junctions (HJs). Resolves HJs by generating two pairs of ligatable, nicked duplex products. Interacts with the structure-specific ERCC4-ERCC1 endonuclease and promotes the cleavage of bubble structures. Interacts with the structure-specific MUS81-EME1 endonuclease and promotes the cleavage of 3'-flap and replication fork-like structures. SLX4 is required for recovery from alkylation-induced DNA damage and is involved in the resolution of DNA double-strand breaks. The sequence is that of Structure-specific endonuclease subunit SLX4 (Slx4) from Mus musculus (Mouse).